We begin with the raw amino-acid sequence, 554 residues long: Germacrene A synthase (554 aa).

Mg(2+) is bound by residues D306, D310, T453, and E457. The short motif at 306-310 (DDTYD) is the DDXXD motif element.

The protein belongs to the terpene synthase family. The cofactor is Mg(2+).

It is found in the cytoplasm. The protein resides in the cytosol. It carries out the reaction (2E,6E)-farnesyl diphosphate = (+)-(R)-germacrene A + diphosphate. It functions in the pathway secondary metabolite biosynthesis; terpenoid biosynthesis. Its function is as follows. Sesquiterpene synthase involved in germacrene A biosynthesis. Also produces additional sesquiterpene products, including 4,5-di-epi-aristolochene, eremophilene, alpha-selinene. The sequence is that of Germacrene A synthase from Pogostemon cablin (Patchouli).